The chain runs to 951 residues: Metal transporter CNNM1 (951 aa).

A helical membrane pass occupies residues 23 to 43 (AVLLLFFSLSPRPPAAAAWLL). The segment at 116-135 (GGVAPSAVPTRPPGPQRCRE) is disordered. One can recognise a CNNM transmembrane domain in the interval 218-414 (LLPPAWLRAL…DPYSDLVKEE (197 aa)). Transmembrane regions (helical) follow at residues 222-242 (AWLRALGALLLLALSALFSGL), 282-302 (LLCTLLLGQAGANAALAGWLY), and 321-341 (IHFPWLPALVCTGAVFLGAEI). 2 consecutive CBS domains span residues 433–495 (LTPL…CTPL) and 502–568 (YNRP…ILDE). Polar residues-rich tracts occupy residues 731 to 740 (SRCSGLNRSE) and 814 to 824 (KAPTTRGTPQT). Disordered regions lie at residues 731-753 (SRCSGLNRSESPNRERSDFGGSN) and 795-830 (MDSSPQSPDMEAFTDGDSTKAPTTRGTPQTPKDDPA). Phosphothreonine occurs at positions 821 and 824. Phosphoserine is present on Ser850. Residues 920–951 (KLLRTLSGQKRKRSPEGERTSEDNSNLTPLIT) form a disordered region. Residues 942–951 (DNSNLTPLIT) are compositionally biased toward polar residues.

This sequence belongs to the ACDP family. Restricted to brain and testis.

It is found in the cell membrane. Its function is as follows. Probable metal transporter. The polypeptide is Metal transporter CNNM1 (CNNM1) (Homo sapiens (Human)).